Consider the following 400-residue polypeptide: MIIKPRIRGFICTTTHPVGCEQNVKEQIALTKAQGPIANAPKRVLVVGSSSGYGLSSRITAAFGGGASTIGVFFEKAGTEKKPGTAGWYNSAAFDKFAKEEGLYSKSLNGDAFSNEAKQKTIDLIKEDLGQIDMVVYSLASPVRKMPETGEVIRSSLKPIGETYTATAVDTNKDAIIEASVEPATEQEIKDTVTVMGGEDWELWINALSEAGVLADGCKTVAYSYIGTELTWPIYWDGALGQAKMDLDRAATALNEKLSTTGGTANVAVLKSVVTQASSAIPVMPLYIAMVFKKMREEGVHEGCQEQILRMFSQRLYKADGSAAEVDEKNRLRLDDWELREDIQQHCRDLWPQVTTENLKDLTDYVEYKEEFLKLFGFGVDGVDYDADVNPEVNFDVADI.

Residues 48–53 (GSSSGY), 74–75 (FE), 111–112 (DA), and 139–140 (LA) contribute to the NAD(+) site. A substrate-binding site is contributed by tyrosine 225. Tyrosine 235 (proton donor) is an active-site residue. NAD(+) is bound by residues lysine 244 and 273–275 (VVT).

Belongs to the TER reductase family. In terms of assembly, monomer.

The enzyme catalyses a 2,3-saturated acyl-[ACP] + NAD(+) = a (2E)-enoyl-[ACP] + NADH + H(+). Its pathway is lipid metabolism; fatty acid biosynthesis. Its function is as follows. Involved in the final reduction of the elongation cycle of fatty acid synthesis (FAS II). Catalyzes the reduction of a carbon-carbon double bond in an enoyl moiety that is covalently linked to an acyl carrier protein (ACP). The protein is Enoyl-[acyl-carrier-protein] reductase [NADH] of Aliivibrio fischeri (strain MJ11) (Vibrio fischeri).